We begin with the raw amino-acid sequence, 264 residues long: ATP synthase subunit a (264 aa).

A run of 6 helical transmembrane segments spans residues 29-49 (TWHI…LWIF), 90-110 (IAPL…MDMI), 134-154 (DVNI…YYSI), 177-197 (IPVN…SLAL), 208-228 (LIFI…SLGV), and 235-255 (LIFH…LTIV).

Belongs to the ATPase A chain family. In terms of assembly, F-type ATPases have 2 components, CF(1) - the catalytic core - and CF(0) - the membrane proton channel. CF(1) has five subunits: alpha(3), beta(3), gamma(1), delta(1), epsilon(1). CF(0) has three main subunits: a(1), b(2) and c(9-12). The alpha and beta chains form an alternating ring which encloses part of the gamma chain. CF(1) is attached to CF(0) by a central stalk formed by the gamma and epsilon chains, while a peripheral stalk is formed by the delta and b chains.

It is found in the cell inner membrane. In terms of biological role, key component of the proton channel; it plays a direct role in the translocation of protons across the membrane. The protein is ATP synthase subunit a of Shewanella oneidensis (strain ATCC 700550 / JCM 31522 / CIP 106686 / LMG 19005 / NCIMB 14063 / MR-1).